The primary structure comprises 1236 residues: MRLISSLLLLVYSARLALSLNLTNQTAVLGYWGSNLAGKMGDRDQKRLSSYCQNTTYDAIILSSVIDFNVDGWPVYDFSNLCSDSDTFSGSELKKCPQIETDIQVCQENGIKVLLSIGGYNGNFSLNNDDDGTNFAFQVWNIFGSGEDSYRPFGKAVVDGFDLEVNKGTNTAYSAFAKRMLEIYASDPRRKYYISAAPTCMVPDHTLTKAISENSFDFLSIHTFNSSTGEGCSGSRNSTFDAWVEYAEDSAYNTNTSLFYGVVGHQNGSNGFISPKNLTRDLLNYKANSTLFGGVTIWDTSLAAMSYDNSSETFVEAIHKILDTKSKHSSSKSSHDSSQGLESTSSIALNPTSSISSTSSSSSTSSAISTISQDHTKTVTSVSDEPTTITASGATSVTTTTKTDFDTVTTTIVSTSTLISASDSTSIIVSSYVSTVTQPASTRVQTTTVSSISTSVKQPTASVASSSVSVPSSSSVQPQSSTPISSSSSASSPQSTLSTSSEVVSEVSSTLLSGSSAIPSTSSSTPSSSIISSPMTSVLSSSSSIPTSSSSDFSSSITTISSGISSSSIPSTFSSVSSILSSSTSSPSSTSLSISSSSTSSTFSSASTSSPSSISSSISSSSTILSSPTPSTSSLMISSSSIISGSSSILSSSISTIPISSSLSTYSSSVIPSSSTLVSSSSSLIVSSSPVASSSSSPIPSSSSLVSTYSASLSNITHSSLSLTAMSSSSAIPTSVNSSTLITASSSNTLLSSITSSSAIVSSTTVSNISSNLPSATASSQSQLTNSSTLATSLYLSSSSSRTISTSSTNEYNTSFHAPTVSSTTSSSSTTSLAANKGVNSNSITSLNLESTSSVTSTAYTTDSVTSTTALTSQGPSSSVVSSSLSSTTSLSTSIPVTSSVAPAVTSTGSETSSVVGSGTDSATSSSWTAETSSSAITSSVAASVTPTSSSSASSWSSSSEVDPSTAASATGSSTSSIATASVSGSSTSSVATASATDSSTSSIAAASVTGSSTSSVATASVTDSSTSSVATASATDSSTSSIAVASVTGSSTSSVATASATDSSTSSVATASITGSLSSSIATASVTGSPTSSVTAVSSTSSVEGTASSTIAAAASAATLSSDAASGSSTVTSSATASSSSSAATTADSSVTTDTPSNDFNANVDTAGLWYVSALSSYSVPAGFAWTTIDGFSVVMPSANAYKKRSLPIKATANPALNGAGTWKTIHTSATTTAA.

The first 19 residues, 1-19, serve as a signal peptide directing secretion; sequence MRLISSLLLLVYSARLALS. Asparagine 21, asparagine 24, asparagine 54, asparagine 123, asparagine 225, asparagine 237, asparagine 255, asparagine 267, asparagine 277, asparagine 288, and asparagine 309 each carry an N-linked (GlcNAc...) asparagine glycan. Residues 26–325 form the GH18 domain; it reads TAVLGYWGSN…EAIHKILDTK (300 aa). Disordered regions lie at residues 326–367, 449–497, and 584–625; these read SKHS…TSSA, VSSI…QSTL, and TSSP…STIL. The span at 339–351 shows a compositional bias: polar residues; that stretch reads QGLESTSSIALNP. The span at 352–367 shows a compositional bias: low complexity; it reads TSSISSTSSSSSTSSA. N-linked (GlcNAc...) asparagine glycans are attached at residues asparagine 715, asparagine 737, asparagine 768, asparagine 786, and asparagine 813. 4 disordered regions span residues 804-836, 868-927, 946-979, and 1125-1159; these read ISTSSTNEYNTSFHAPTVSSTTSSSSTTSLAAN, TTAL…TSSS, TPTSSSSASSWSSSSEVDPSTAASATGSSTSSIA, and AASGSSTVTSSATASSSSSAATTADSSVTTDTPSN. Over residues 810 to 821 the composition is skewed to polar residues; it reads NEYNTSFHAPTV. A compositionally biased stretch (low complexity) spans 822-832; it reads SSTTSSSSTTS. The segment covering 1125 to 1156 has biased composition (low complexity); that stretch reads AASGSSTVTSSATASSSSSAATTADSSVTTDT.

The protein belongs to the glycosyl hydrolase 18 family. Chitinase class III subfamily.

It is found in the secreted. The sequence is that of Chitinase-like protein PB1E7.04c from Schizosaccharomyces pombe (strain 972 / ATCC 24843) (Fission yeast).